Here is a 163-residue protein sequence, read N- to C-terminus: Lysosomal enzyme trafficking factor (163 aa).

The next 2 membrane-spanning stretches (helical) occupy residues 40-60 (MGWI…YYVF) and 98-118 (LPFW…FLFL).

Belongs to the LYSET family. As to quaternary structure, interacts with GNPTAB; this interaction is important for proper localization of GNPTAB in Golgi stacks. Interacts with MBTPS1.

The protein localises to the golgi apparatus membrane. Its function is as follows. Required for mannose-6-phosphate-dependent trafficking of lysosomal enzymes. LYSET bridges GlcNAc-1-phosphate transferase (GNPTAB), to the membrane-bound transcription factor site-1 protease (MBTPS1), thus allowing proteolytic activation of the GNPTAB. GNPTAB is involved in the regulation of M6P-dependent Golgi-to-lysosome trafficking of lysosomal enzymes. LYSET is thus an essential factor for maturation and delivery of lysosomal hydrolases. Functionally, (Microbial infection) Essential for infection by muliple viruses, including SARS-CoV-2, that utilize activated cathepsins for entry after M6P-dependent lysosomal transport. This chain is Lysosomal enzyme trafficking factor, found in Homo sapiens (Human).